A 687-amino-acid chain; its full sequence is Pentatricopeptide repeat-containing protein At3g09060 (687 aa).

PPR repeat units lie at residues S42–C76, D77–I107, A113–P147, N148–P182, D183–P217, D218–P253, N254–K288, D289–I323, D324–N358, I359–A392, D393–L427, D428–L462, N463–P497, T498–P532, D533–T567, D568–A602, N603–P637, and D638–P672.

The protein belongs to the PPR family. P subfamily.

This is Pentatricopeptide repeat-containing protein At3g09060 from Arabidopsis thaliana (Mouse-ear cress).